Here is a 252-residue protein sequence, read N- to C-terminus: Imidazole glycerol phosphate synthase subunit HisF (252 aa).

Catalysis depends on residues Asp-11 and Asp-130.

The protein belongs to the HisA/HisF family. In terms of assembly, heterodimer of HisH and HisF.

The protein resides in the cytoplasm. It catalyses the reaction 5-[(5-phospho-1-deoxy-D-ribulos-1-ylimino)methylamino]-1-(5-phospho-beta-D-ribosyl)imidazole-4-carboxamide + L-glutamine = D-erythro-1-(imidazol-4-yl)glycerol 3-phosphate + 5-amino-1-(5-phospho-beta-D-ribosyl)imidazole-4-carboxamide + L-glutamate + H(+). Its pathway is amino-acid biosynthesis; L-histidine biosynthesis; L-histidine from 5-phospho-alpha-D-ribose 1-diphosphate: step 5/9. Its function is as follows. IGPS catalyzes the conversion of PRFAR and glutamine to IGP, AICAR and glutamate. The HisF subunit catalyzes the cyclization activity that produces IGP and AICAR from PRFAR using the ammonia provided by the HisH subunit. This is Imidazole glycerol phosphate synthase subunit HisF from Sulfurihydrogenibium sp. (strain YO3AOP1).